A 385-amino-acid chain; its full sequence is S-adenosylmethionine synthase (385 aa).

H16 serves as a coordination point for ATP. D18 is a binding site for Mg(2+). E44 is a K(+) binding site. Residues E57 and Q100 each coordinate L-methionine. Positions 100–110 are flexible loop; it reads QSPDINQGVDR. Residues 164–166, 230–231, D239, 245–246, A262, and K266 contribute to the ATP site; these read DGK, KF, and RK. Position 239 (D239) interacts with L-methionine. Residue K270 coordinates L-methionine.

The protein belongs to the AdoMet synthase family. Homotetramer; dimer of dimers. Requires Mg(2+) as cofactor. It depends on K(+) as a cofactor.

It localises to the cytoplasm. It catalyses the reaction L-methionine + ATP + H2O = S-adenosyl-L-methionine + phosphate + diphosphate. It functions in the pathway amino-acid biosynthesis; S-adenosyl-L-methionine biosynthesis; S-adenosyl-L-methionine from L-methionine: step 1/1. In terms of biological role, catalyzes the formation of S-adenosylmethionine (AdoMet) from methionine and ATP. The overall synthetic reaction is composed of two sequential steps, AdoMet formation and the subsequent tripolyphosphate hydrolysis which occurs prior to release of AdoMet from the enzyme. The protein is S-adenosylmethionine synthase of Helicobacter pylori (strain Shi470).